The primary structure comprises 265 residues: Probable S-methyl-5'-thioinosine phosphorylase (265 aa).

Residues Ser15 and 55–56 (RH) each bind phosphate. Residue Met187 participates in substrate binding. Residue Thr188 participates in phosphate binding. 211 to 213 (NYA) is a binding site for substrate.

Belongs to the PNP/MTAP phosphorylase family. MTAP subfamily. Homotrimer.

It catalyses the reaction S-methyl-5'-thioinosine + phosphate = 5-(methylsulfanyl)-alpha-D-ribose 1-phosphate + hypoxanthine. It participates in purine metabolism; purine nucleoside salvage. Catalyzes the reversible phosphorylation of S-methyl-5'-thioinosine (MTI) to hypoxanthine and 5-methylthioribose-1-phosphate. Involved in the breakdown of S-methyl-5'-thioadenosine (MTA), a major by-product of polyamine biosynthesis. Catabolism of (MTA) occurs via deamination to MTI and phosphorolysis to hypoxanthine. The sequence is that of Probable S-methyl-5'-thioinosine phosphorylase from Thermodesulfovibrio yellowstonii (strain ATCC 51303 / DSM 11347 / YP87).